Consider the following 214-residue polypeptide: Imidazole glycerol phosphate synthase subunit HisH 2 (214 aa).

Residues 2 to 210 (KIVIIDYDMG…LDWVKIQKLG (209 aa)) enclose the Glutamine amidotransferase type-1 domain. Cys-82 acts as the Nucleophile in catalysis. Residues His-185 and Glu-187 contribute to the active site.

As to quaternary structure, heterodimer of HisH and HisF.

It is found in the cytoplasm. It catalyses the reaction 5-[(5-phospho-1-deoxy-D-ribulos-1-ylimino)methylamino]-1-(5-phospho-beta-D-ribosyl)imidazole-4-carboxamide + L-glutamine = D-erythro-1-(imidazol-4-yl)glycerol 3-phosphate + 5-amino-1-(5-phospho-beta-D-ribosyl)imidazole-4-carboxamide + L-glutamate + H(+). The catalysed reaction is L-glutamine + H2O = L-glutamate + NH4(+). It participates in amino-acid biosynthesis; L-histidine biosynthesis; L-histidine from 5-phospho-alpha-D-ribose 1-diphosphate: step 5/9. Functionally, IGPS catalyzes the conversion of PRFAR and glutamine to IGP, AICAR and glutamate. The HisH subunit provides the glutamine amidotransferase activity that produces the ammonia necessary to HisF for the synthesis of IGP and AICAR. This chain is Imidazole glycerol phosphate synthase subunit HisH 2 (hisH2), found in Vibrio vulnificus (strain YJ016).